The following is a 377-amino-acid chain: Putative efflux system component YknX (377 aa).

Residues 3-23 (KVWIGIGIAVIVALFVGINIY) traverse the membrane as a helical segment. Residues 95–187 (TNEQLSLEKE…RVSDLEVKSE (93 aa)) are a coiled coil.

The protein belongs to the membrane fusion protein (MFP) (TC 8.A.1) family. Part of a complex composed of YknX, YknY and YknZ. The complex interacts with YknW.

Its subcellular location is the cell membrane. Its function is as follows. Part of an unusual four-component transporter, which is required for protection against the killing factor SdpC (sporulation-delaying protein). The chain is Putative efflux system component YknX (yknX) from Bacillus subtilis (strain 168).